We begin with the raw amino-acid sequence, 345 residues long: Homeobox protein DBX1 (345 aa).

Disordered regions lie at residues 55–103 and 241–345; these read PRGS…VSPA and KERE…ITVS. Positions 182–241 form a DNA-binding region, homeobox; it reads GMLRRAVFSDVQRKALEKMFQKQKYISKPDRKKLAAKLGLKDSQVKIWFQNRRMKWRNSK. Over residues 300 to 309 the composition is skewed to basic and acidic residues; the sequence is DPRHLRDPRL. The span at 330 to 345 shows a compositional bias: acidic residues; sequence SDSEDDEEGEEEITVS.

It belongs to the H2.0 homeobox family.

It localises to the nucleus. Functionally, could have a role in patterning the central nervous system during embryogenesis. Has a key role in regulating the distinct phenotypic features that distinguish two major classes of ventral interneurons, V0 and V1 neurons. Regulates the transcription factor profile, neurotransmitter phenotype, intraspinal migratory path and axonal trajectory of V0 neurons, features that differentiate them from an adjacent set of V1 neurons. This is Homeobox protein DBX1 (DBX1) from Bos taurus (Bovine).